We begin with the raw amino-acid sequence, 412 residues long: Phytoene synthase 1, chloroplastic (412 aa).

Residues 1 to 129 constitute a chloroplast transit peptide; sequence MSVALLWVVS…AYDRCGEVCA (129 aa).

This sequence belongs to the phytoene/squalene synthase family. As to quaternary structure, monomer. Interacts with SGR1.

It is found in the plastid. The protein resides in the chloroplast. It catalyses the reaction 2 (2E,6E,10E)-geranylgeranyl diphosphate = 15-cis-phytoene + 2 diphosphate. It participates in carotenoid biosynthesis; phytoene biosynthesis; all-trans-phytoene from geranylgeranyl diphosphate: step 1/1. Catalyzes the reaction from prephytoene diphosphate to phytoene. The sequence is that of Phytoene synthase 1, chloroplastic (PSY1) from Solanum lycopersicum (Tomato).